We begin with the raw amino-acid sequence, 479 residues long: Baeyer-Villiger monooxygenase AacuH (479 aa).

Residues 14–34 form a disordered region; sequence DSLGHPDGASRPPVSAESLSR.

This sequence belongs to the AflY oxidoreductase family.

The protein operates within secondary metabolite biosynthesis. Functionally, baeyer-Villiger monooxygenase; part of the gene cluster that mediates the biosynthesis of the tetrahydroxanthone dimer secalonic acid D. The pathway begins with the synthesis of atrochrysone thioester by the polyketide synthase AacuL. The atrochrysone carboxyl ACP thioesterase AacuM then breaks the thioester bond and releases the atrochrysone carboxylic acid from AacuL. Atrochrysone carboxylic acid is decarboxylated by the decarboxylase AacuI, and oxidized by the anthrone oxygenase AacuG to yield emodin. Emodin is then reduced to emodin hydroquinone by a yet unidentified oxidoreductase. A-ring reduction by the short chain dehydrogenase AacuN, dehydration by the scytalone dehydratase-like protein AacuK and probable spontaneous re-oxidation, results in overall deoxygenation to chrysophanol. Baeyer-Villiger oxidation by the Baeyer-Villiger monooxygenase (BVMO) AacuH then yields monodictyphenone. Monodictyphenone is transformed into compounds with the tetrahydroxanthone skeleton via methylesterification by the methyltransferase AacuQ, followed by the action of the flavin-dependent monooxygenase AacuC, the isomerase AacuP, and the short chain dehydrogenase/reductase AacuF or AacuD. AacuF and AacuD should accept the same compound as a substrate but perform the ketoreduction with a different stereoselectivity, thus yielding blennolides B and A, respectively. In the final step of the biosynthesis, the cytochrome P450 monooxygenase AacuE accepts blennolide B and/or blennolide A to conduct the dimerization reaction to furnish the tetrahydroxanthone dimers, secalonic acids D, B, and F. This chain is Baeyer-Villiger monooxygenase AacuH, found in Aspergillus aculeatus (strain ATCC 16872 / CBS 172.66 / WB 5094).